Here is a 467-residue protein sequence, read N- to C-terminus: Cysteine--tRNA ligase (467 aa).

C28 contacts Zn(2+). The 'HIGH' region motif lies at 30–40; it reads MTVYDYCHLGH. Zn(2+) is bound by residues C209, H234, and E238. Positions 266–270 match the 'KMSKS' region motif; it reads KMSKS. An ATP-binding site is contributed by K269.

It belongs to the class-I aminoacyl-tRNA synthetase family. In terms of assembly, monomer. Requires Zn(2+) as cofactor.

The protein localises to the cytoplasm. It catalyses the reaction tRNA(Cys) + L-cysteine + ATP = L-cysteinyl-tRNA(Cys) + AMP + diphosphate. The protein is Cysteine--tRNA ligase of Hahella chejuensis (strain KCTC 2396).